A 510-amino-acid chain; its full sequence is O-acetyltransferase pyr7 (510 aa).

The protein belongs to the fumigaclavine B O-acetyltransferase family.

Its pathway is secondary metabolite biosynthesis; terpenoid biosynthesis. Its function is as follows. O-acetyltransferase; part of the gene cluster that mediates the biosynthesis of pyripyropene A, a specific human acyl-coenzyme A:cholesterol acyltransferase 2 inhibitor. The first step of the pathway is the synthesis of nicotinyl-CoA from nicotinic acid by the nicotinic acid-CoA ligase pyr1. Nicotinyl-CoA is then a substrate of polyketide synthase pyr2 to produce 4-hydroxy-6-(3-pyridinyl)-2H-pyran-2-one (HPPO) which is further prenylated by the polyprenyl transferase pyr6 to yield farnesyl-HPPO. The next steps consist of an epoxidation of farnesyl-HPPO to epoxyfarnesyl-HPPO by FAD-dependent monooxygenase pyr5 and a cyclization of the terpenoid portion by the terpene cyclase pyr4 to yield deacetyl-pyripyropene E. The 2 cytochrome P450 monooxygenases pyr3 and pyr9, and the 2 acetyltransferases pyr7 and pyr8 are involved in the conversion of deacetyl-pyripyropene E into pyripyropene A through several cycles of oxidation and acetylation steps. Pyr7 acetylates deacetyl-pyripyropene E to pyripyropene E which is oxidized to 11-deacetyl-pyripyropene O by pyr3, which is in turn acetylated into pyripyropene O by pyr8. Pyripyropene O is then oxidized to deacetyl-pyripyropene A by pyr9. Deacetyl-pyripyropene A is finally acetylated to pyripyropene A by pyr8. The protein is O-acetyltransferase pyr7 of Aspergillus fumigatus (strain ATCC MYA-4609 / CBS 101355 / FGSC A1100 / Af293) (Neosartorya fumigata).